Reading from the N-terminus, the 173-residue chain is MTNDSEIVVEEKISGPISDWLSNNGFENIPLKEDHLGIEVIKISPNNLLTIVEALKNDGFNYLQCQGGYDEGPGLNIVCFYNLIEMNELKEDISPREVRLKVFLDRNGDLTVPSLYSLFRGADWQERETFDMYGVNFQGHPHPKRLLMPEDWKGWPLRKDYVQPDFYEMQDAY.

This sequence belongs to the complex I 30 kDa subunit family. NDH-1 can be composed of about 15 different subunits; different subcomplexes with different compositions have been identified which probably have different functions.

The protein resides in the cellular thylakoid membrane. The enzyme catalyses a plastoquinone + NADH + (n+1) H(+)(in) = a plastoquinol + NAD(+) + n H(+)(out). It carries out the reaction a plastoquinone + NADPH + (n+1) H(+)(in) = a plastoquinol + NADP(+) + n H(+)(out). Its function is as follows. NDH-1 shuttles electrons from an unknown electron donor, via FMN and iron-sulfur (Fe-S) centers, to quinones in the respiratory and/or the photosynthetic chain. The immediate electron acceptor for the enzyme in this species is believed to be plastoquinone. Couples the redox reaction to proton translocation, and thus conserves the redox energy in a proton gradient. Cyanobacterial NDH-1 also plays a role in inorganic carbon-concentration. The chain is NAD(P)H-quinone oxidoreductase subunit J from Prochlorococcus marinus (strain NATL2A).